A 2190-amino-acid polypeptide reads, in one-letter code: Highly-reducing polyketide synthase 1 (2190 aa).

One can recognise a Ketosynthase family 3 (KS3) domain in the interval 6–431 (LTPVAIVGYA…GANAHVVLGA (426 aa)). Catalysis depends on for beta-ketoacyl synthase activity residues cysteine 179, histidine 315, and histidine 355. The Malonyl-CoA:ACP transacylase (MAT) domain maps to 541–857 (FVFTGQGAQW…VSVLARGQNA (317 aa)). Residues 925–1061 (NDLLGSLADW…GLVGVRNSPA (137 aa)) form an N-terminal hotdog fold region. Residues 925–1246 (NDLLGSLADW…MTPLRESSGS (322 aa)) enclose the PKS/mFAS DH domain. Histidine 957 acts as the Proton acceptor; for dehydratase activity in catalysis. The C-terminal hotdog fold stretch occupies residues 1089–1246 (TETVDVQAMY…MTPLRESSGS (158 aa)). Residue aspartate 1154 is the Proton donor; for dehydratase activity of the active site. Positions 1494–1804 (GSLDSFYFVD…SGKSMGKLVI (311 aa)) constitute an Enoyl reductase (ER) domain. In terms of domain architecture, Ketoreductase (KR) spans 1828-2005 (ASYLIVGGTG…GTSLDLTAVS (178 aa)). The Carrier domain maps to 2107-2184 (KALEVLYGAL…ELAKLISKKS (78 aa)). Serine 2144 is subject to O-(pantetheine 4'-phosphoryl)serine.

It depends on pantetheine 4'-phosphate as a cofactor.

Its function is as follows. Highly-reducing polyketide synthase; part of the gene cluster that mediates the biosynthesis of liamocins, glycolipids (also called heavy oils) composed of a single mannitol or arabitol headgroup linked to either three, four or even six 3,5-dihydroxydecanoic ester tail-groups. Within the pathway, PKS1 is responsible for biosynthesis of 3,5-dihydroxydecanoic acid from acetyl-CoA and malonyl-CoA. A phosphopantetheine transferase (PPTase) activates the HR-PKS. The esterase EST1 then catalyzes ester bond formation between 3,5-dihydroxydecanoic acid and mannitol (provided by the mannitol-1-phosphate 5-dehydrogenase and the NADP-dependent mannitol dehydrogenase) or arabinol (provided by the L-arabinitol 4-dehydrogenase). This is Highly-reducing polyketide synthase 1 from Aureobasidium melanogenum (Aureobasidium pullulans var. melanogenum).